The chain runs to 207 residues: Fibroblast growth factor 18 (207 aa).

The first 27 residues, 1–27, serve as a signal peptide directing secretion; it reads MYSAPSACTCLCLHFLLLCFQVQVLVA. A glycan (N-linked (GlcNAc...) asparagine) is linked at Asn-39. Residues Cys-109 and Cys-127 are joined by a disulfide bond. N-linked (GlcNAc...) asparagine glycosylation is present at Asn-137. The segment at 157–186 is disordered; the sequence is GRPRKGPKTRENQQDVHFMKRYPKGQPELQ. The segment covering 164 to 174 has biased composition (basic and acidic residues); it reads KTRENQQDVHF.

It belongs to the heparin-binding growth factors family. As to quaternary structure, interacts with FGFR3 and FGFR4.

Its subcellular location is the secreted. Plays an important role in the regulation of cell proliferation, cell differentiation and cell migration. Required for normal ossification and bone development. Stimulates hepatic and intestinal proliferation. This Homo sapiens (Human) protein is Fibroblast growth factor 18 (FGF18).